The chain runs to 366 residues: Dihydroflavonol 4-reductase (366 aa).

Lys-45 and Tyr-164 together coordinate NADP(+).

The protein belongs to the NAD(P)-dependent epimerase/dehydratase family. Dihydroflavonol-4-reductase subfamily.

It catalyses the reaction a (2R,3S,4S)-leucoanthocyanidin + NADP(+) = a (2R,3R)-dihydroflavonol + NADPH + H(+). It carries out the reaction (2S)-flavan-4-ol + NADP(+) = (2S)-flavanone + NADPH + H(+). It participates in pigment biosynthesis; anthocyanin biosynthesis. Its function is as follows. Bifunctional enzyme involved in flavonoid metabolism. This chain is Dihydroflavonol 4-reductase (DFR), found in Gerbera hybrida (Daisy).